The following is a 207-amino-acid chain: MGNPKKRAEKAEAAKSRKQDEEKKKKDAEEDEKWSKGVKTNKKEQEAEKRKAALERKAERERLEKEEMESLPSKGGKGSKKAAKKNSSLDAFLNETPQTASYSARNIDDALDLLSLNNSSSKDKIDRHPERRFKAALTEYKQSRLPELRKEQPGLRLNQYEDIMYKEFQKHPDNPFNKMNVSYNTSQDEVEQLRKARKAELEARLRE.

Residues 1–90 form a disordered region; the sequence is MGNPKKRAEK…KAAKKNSSLD (90 aa). Positions 5-71 form a coiled coil; that stretch reads KKRAEKAEAA…RLEKEEMESL (67 aa). Basic and acidic residues-rich tracts occupy residues 9–28 and 41–65; these read EKAEAAKSRKQDEEKKKKDA and NKKEQEAEKRKAALERKAERERLEK.

This sequence belongs to the CCDC124 family. In terms of assembly, associates with translationally inactive ribosomes in the nonrotated state.

The protein resides in the cytoplasm. Its subcellular location is the nucleus. Its function is as follows. Ribosome-binding protein involved in ribosome hibernation by associating with translationally inactive ribosomes. Required for translational recovery after starvation from stationary phase. May facilitate rapid translation reactivation by stabilizing the recycling-competent state of inactive ribosomes. The chain is Coiled-coil domain-containing protein 124 homolog from Schizosaccharomyces pombe (strain 972 / ATCC 24843) (Fission yeast).